A 525-amino-acid polypeptide reads, in one-letter code: MATLLRSKLTNVATSVSNKSQAKVSGMFARMGFQAATDEEAVGFAHCDDLDFEHRQGLQMDILKSEGEPCGDEGAEPPVEGDIHYQRGGAPLPPSGSKDQAVGAGGEFGGHDKPKITAWEAGWNVTNAIQGMFVLGLPYAILHGGYLGLFLIIFAAVVCCYTGKILIACLYEENEDGEVVRVRDSYVAIANACCAPRFPTLGGRVVNVAQIIELVMTCILYVVVSGNLMYNSFPGLPVSQKSWSIIATAVLLPCAFLKNLKAVSKFSLLCTLAHFVINILVIAYCLSRARDWAWEKVKFYIDVKKFPISIGIIVFSYTSQIFLPSLEGNMQQPSEFHCMMNWTHIAACVLKGLFALVAYLTWADETKEVITDNLPGSIRAVVNIFLVAKALLSYPLPFFAAVEVLEKSLFQEGSRAFFPACYGGDGRLKSWGLTLRCALVVFTLLMAIYVPHFALLMGLTGSLTGAGLCFLLPSLFHLRLLWRKLLWHQVFFDVAIFVIGGICSVSGFVHSLEGLIEAYRTNAED.

At 1–132 the chain is on the cytoplasmic side; the sequence is MATLLRSKLT…WNVTNAIQGM (132 aa). A helical membrane pass occupies residues 133-153; that stretch reads FVLGLPYAILHGGYLGLFLII. At 154–204 the chain is on the lumenal, vesicle side; it reads FAAVVCCYTGKILIACLYEENEDGEVVRVRDSYVAIANACCAPRFPTLGGR. The residue at position 186 (Tyr186) is a 3'-nitrotyrosine. The chain crosses the membrane as a helical span at residues 205–225; sequence VVNVAQIIELVMTCILYVVVS. Residues 226–265 are Cytoplasmic-facing; that stretch reads GNLMYNSFPGLPVSQKSWSIIATAVLLPCAFLKNLKAVSK. A helical membrane pass occupies residues 266–286; it reads FSLLCTLAHFVINILVIAYCL. At 287–305 the chain is on the lumenal, vesicle side; it reads SRARDWAWEKVKFYIDVKK. Residues 306-326 form a helical membrane-spanning segment; it reads FPISIGIIVFSYTSQIFLPSL. At 327-341 the chain is on the cytoplasmic side; that stretch reads EGNMQQPSEFHCMMN. The helical transmembrane segment at 342-362 threads the bilayer; the sequence is WTHIAACVLKGLFALVAYLTW. Residues 363 to 383 lie on the Lumenal, vesicle side of the membrane; it reads ADETKEVITDNLPGSIRAVVN. Residues 384 to 404 traverse the membrane as a helical segment; sequence IFLVAKALLSYPLPFFAAVEV. Over 405-438 the chain is Cytoplasmic; that stretch reads LEKSLFQEGSRAFFPACYGGDGRLKSWGLTLRCA. Residues 439–459 traverse the membrane as a helical segment; sequence LVVFTLLMAIYVPHFALLMGL. Residues 460–461 are Lumenal, vesicle-facing; sequence TG. A helical membrane pass occupies residues 462–482; the sequence is SLTGAGLCFLLPSLFHLRLLW. At 483-489 the chain is on the cytoplasmic side; that stretch reads RKLLWHQ. A helical membrane pass occupies residues 490–510; it reads VFFDVAIFVIGGICSVSGFVH. The Lumenal, vesicle portion of the chain corresponds to 511 to 525; the sequence is SLEGLIEAYRTNAED.

The protein belongs to the amino acid/polyamine transporter 2 family. Brain. Expressed at high levels within the neocortex, hippocampus, cerebellum, striatum, septal nuclei and the reticular nucleus of the thalamus. Also expressed in islets where it is more abundant in the peripheral/mantle region. Highly expressed in the nerve endings of GABA neurons in the brain and spinal cord but also in glycinergic nerve endings. Expressed in glycine-, GABA- or GABA- and glycine-containing boutons.

It is found in the cytoplasmic vesicle. It localises to the secretory vesicle. The protein resides in the synaptic vesicle membrane. Its subcellular location is the presynapse. It carries out the reaction beta-alanine(out) + n H(+)(in) = beta-alanine(in) + n H(+)(out). The enzyme catalyses 4-aminobutanoate(out) + n H(+)(in) = 4-aminobutanoate(in) + n H(+)(out). The catalysed reaction is glycine(out) + n H(+)(in) = glycine(in) + n H(+)(out). Functionally, antiporter that exchanges vesicular protons for cytosolic 4-aminobutanoate or to a lesser extend glycine, thus allowing their secretion from nerve terminals. The transport is equally dependent on the chemical and electrical components of the proton gradient. May also transport beta-alanine. Acidification of GABAergic synaptic vesicles is a prerequisite for 4-aminobutanoate uptake. The sequence is that of Vesicular inhibitory amino acid transporter from Rattus norvegicus (Rat).